The primary structure comprises 195 residues: Probable GTP-binding protein EngB (195 aa).

One can recognise an EngB-type G domain in the interval 24–195 (GLSEVALSGR…QIWDLIANYL (172 aa)). Residues 32-39 (GRSNVGKS), 59-63 (GKTQT), 77-80 (DVPG), 144-147 (TKED), and 176-178 (YSS) contribute to the GTP site. Residues serine 39 and threonine 61 each coordinate Mg(2+).

The protein belongs to the TRAFAC class TrmE-Era-EngA-EngB-Septin-like GTPase superfamily. EngB GTPase family. Mg(2+) serves as cofactor.

Necessary for normal cell division and for the maintenance of normal septation. This chain is Probable GTP-binding protein EngB, found in Staphylococcus haemolyticus (strain JCSC1435).